The sequence spans 214 residues: Cell division protein DamX (214 aa).

2 stretches are compositionally biased toward polar residues: residues 1–14 (GSGTPTEAQTQPQQ) and 43–53 (QGMTGAASTLP). Residues 1–133 (GSGTPTEAQT…SVQSAPGSHY (133 aa)) form a disordered region. The helical transmembrane segment at 44-65 (GMTGAASTLPTAPATVMSGAAA) threads the bilayer. Composition is skewed to low complexity over residues 78–97 (QQHKTPAKTAAAKPTATQHK) and 110–131 (SSTAKAGAVASSGSSVQSAPGS). The region spanning 127-204 (SAPGSHYTLQ…VQAKKPWVRP (78 aa)) is the SPOR domain.

This sequence belongs to the DamX family.

The protein resides in the cell inner membrane. Non-essential cell division protein. The sequence is that of Cell division protein DamX from Serratia marcescens.